The primary structure comprises 213 residues: Na(+)-translocating NADH-quinone reductase subunit D (213 aa).

Transmembrane regions (helical) follow at residues 22–42 (LIAI…TTAL), 43–63 (TMGF…SLLR), 77–97 (IIIS…FFTI), 101–121 (LSVF…AESM), 131–151 (FLDG…ISII), and 183–203 (LGLM…IWIV).

The protein belongs to the NqrDE/RnfAE family. As to quaternary structure, composed of six subunits; NqrA, NqrB, NqrC, NqrD, NqrE and NqrF.

Its subcellular location is the cell inner membrane. It carries out the reaction a ubiquinone + n Na(+)(in) + NADH + H(+) = a ubiquinol + n Na(+)(out) + NAD(+). Its function is as follows. NQR complex catalyzes the reduction of ubiquinone-1 to ubiquinol by two successive reactions, coupled with the transport of Na(+) ions from the cytoplasm to the periplasm. NqrA to NqrE are probably involved in the second step, the conversion of ubisemiquinone to ubiquinol. This chain is Na(+)-translocating NADH-quinone reductase subunit D, found in Chlamydia trachomatis serovar A (strain ATCC VR-571B / DSM 19440 / HAR-13).